The chain runs to 368 residues: Peptide chain release factor 2 (368 aa).

Position 248 is an N5-methylglutamine (Gln-248).

Belongs to the prokaryotic/mitochondrial release factor family. In terms of processing, methylated by PrmC. Methylation increases the termination efficiency of RF2.

It localises to the cytoplasm. Peptide chain release factor 2 directs the termination of translation in response to the peptide chain termination codons UGA and UAA. The polypeptide is Peptide chain release factor 2 (Corynebacterium glutamicum (strain R)).